Consider the following 547-residue polypeptide: (R)-citramalate synthase (547 aa).

Residues 8–278 enclose the Pyruvate carboxyltransferase domain; the sequence is LWLYDTTLRD…YDCIEPEKLA (271 aa).

The protein belongs to the alpha-IPM synthase/homocitrate synthase family.

The enzyme catalyses pyruvate + acetyl-CoA + H2O = (3R)-citramalate + CoA + H(+). Its pathway is amino-acid biosynthesis; L-isoleucine biosynthesis; 2-oxobutanoate from pyruvate: step 1/3. In terms of biological role, catalyzes the condensation of pyruvate and acetyl-coenzyme A to form (R)-citramalate. This Synechocystis sp. (strain ATCC 27184 / PCC 6803 / Kazusa) protein is (R)-citramalate synthase.